Here is a 161-residue protein sequence, read N- to C-terminus: MEYTGSKYIGEYVDGRMEGKAKYILPTETIYVGEMKDGMFHGEGTLYFPSGSQYDAIWENGLAIKGTYTFSDGLHYDEKNWHYCDGYDRRFYTEILNGLKPAGMAQLTNMDPPRKIPKGYYDCGDGFYNPVTRVVKDYRNRFLRNADDDEHEWITRTCRKG.

MORN repeat units follow at residues 8 to 30 (YIGE…TETI), 31 to 53 (YVGE…SGSQ), and 54 to 75 (YDAI…DGLH).

As to expression, expressed in sperm (at protein level).

It is found in the cell projection. The protein resides in the cilium. Its subcellular location is the flagellum. The protein is MORN repeat-containing protein 5 (MORN5) of Homo sapiens (Human).